Reading from the N-terminus, the 473-residue chain is MATSDSIVDDRKQLHVATFPWLAFGHILPYLQLSKLIAEKGHKVSFLSTTRNIQRLSSHISPLINVVQLTLPRVQELPEDAEATTDVHPEDIPYLKKASDGLQPEVTRFLEQHSPDWIIYDYTHYWLPSIAASLGISRAHFSVTTPWAIAYMGPSADAMINGSDGRTTVEDLTTPPKWFPFPTKVCWRKHDLARLVPYKAPGISDGYRMGLVLKGSDCLLSKCYHEFGTQWLPLLETLHQVPVVPVGLLPPEVPGDEKDETWVSIKKWLDGKQKGSVVYVALGSEVLVSQTEVVELALGLELSGLPFVWAYRKPKGPAKSDSVELPDGFVERTRDRGLVWTSWAPQLRILSHESVCGFLTHCGSGSIVEGLMFGHPLIMLPIFGDQPLNARLLEDKQVGIEIPRNEEDGCLTKESVARSLRSVVVEKEGEIYKANARELSKIYNDTKVEKEYVSQFVDYLEKNTRAVAIDHES.

Histidine 26 (proton acceptor) is an active-site residue. Histidine 26 contributes to the an anthocyanidin binding site. Aspartate 121 (charge relay) is an active-site residue. Positions 344, 346, 361, 366, and 369 each coordinate UDP-alpha-D-glucose. Glycine 384 is a binding site for an anthocyanidin. UDP-alpha-D-glucose-binding residues include aspartate 385 and glutamine 386.

Belongs to the UDP-glycosyltransferase family.

The enzyme catalyses steviolmonoside + UDP-alpha-D-glucose = steviolbioside + UDP + H(+). The catalysed reaction is rubusoside + UDP-alpha-D-glucose = stevioside + UDP + H(+). It carries out the reaction stevioside + UDP-alpha-D-glucose = rebaudioside E + UDP + H(+). It catalyses the reaction rebaudioside A + UDP-alpha-D-glucose = rebaudioside D + UDP + H(+). Functionally, involved in the biosynthesis of steviol glycosides in leaves. Converts the mono-glycoside steviolmonoside to the bi-glycoside steviolbioside. Converts the bi-glycoside rubusoside to the tri-glycoside stevioside. Converts the tri-glycoside stevioside to the tetra-glycoside rebaudioside E. Converts the tetra-glycoside rebaudioside A to the penta-glycoside rebaudioside E. In Stevia rebaudiana (Stevia), this protein is UDP-glycosyltransferase 91D2.